The primary structure comprises 284 residues: L-ribulose-5-phosphate 3-epimerase UlaE (284 aa).

Belongs to the L-ribulose-5-phosphate 3-epimerase family.

The catalysed reaction is L-ribulose 5-phosphate = L-xylulose 5-phosphate. The protein operates within cofactor degradation; L-ascorbate degradation; D-xylulose 5-phosphate from L-ascorbate: step 3/4. Functionally, catalyzes the isomerization of L-xylulose-5-phosphate to L-ribulose-5-phosphate. Is involved in the anaerobic L-ascorbate utilization. The sequence is that of L-ribulose-5-phosphate 3-epimerase UlaE from Escherichia coli O139:H28 (strain E24377A / ETEC).